A 393-amino-acid chain; its full sequence is MSGDFDTIRDASSSDEVQLVRLLEEKIKSLQIEIENLRKELNYYKAEMEKMLSPPLIEAVVLDVLPDGRVLVRSSSGPNLVVNVASHIDQKLIKPGVSVALNQRGSTILEVLPQKEDPIVKTMEIVEKPNVTYSEIGGLEEQIKELREVVELPLKKPEIFREIGVEPPKGVLLYGPPGTGKTMLAKAVATESNAVFIHVVASEFAQKFVGEGARIVRELFEMAKRKAPSIIFIDEIDAIGAKRIDIGTSGEREIQRTLMQLLAELDGFNPLDNVKIIAATNRIDILDPALLRPGRFDRIIEVPLPDFRGRTEIFNIYLKKMKVEDNINLELLSQLSEGFSGADIKNVCVEAAYMAIRDGRNKVTMKDLVNAITKINVKRNNMESMKERREKYS.

A coiled-coil region spans residues Ser14–Ser53. ATP contacts are provided by residues Gly178–Met183 and Tyr317. The segment at Lys391 to Ser393 is docks into pockets in the proteasome alpha-ring to cause gate opening.

The protein belongs to the AAA ATPase family. As to quaternary structure, homohexamer. The hexameric complex has a two-ring architecture resembling a top hat that caps the 20S proteasome core at one or both ends. Upon ATP-binding, the C-terminus of PAN interacts with the alpha-rings of the proteasome core by binding to the intersubunit pockets.

Its subcellular location is the cytoplasm. Its function is as follows. ATPase which is responsible for recognizing, binding, unfolding and translocation of substrate proteins into the archaeal 20S proteasome core particle. Is essential for opening the gate of the 20S proteasome via an interaction with its C-terminus, thereby allowing substrate entry and access to the site of proteolysis. Thus, the C-termini of the proteasomal ATPase function like a 'key in a lock' to induce gate opening and therefore regulate proteolysis. Unfolding activity requires energy from ATP hydrolysis, whereas ATP binding alone promotes ATPase-20S proteasome association which triggers gate opening, and supports translocation of unfolded substrates. This is Proteasome-activating nucleotidase from Saccharolobus islandicus (strain Y.N.15.51 / Yellowstone #2) (Sulfolobus islandicus).